We begin with the raw amino-acid sequence, 520 residues long: GMP synthase [glutamine-hydrolyzing] (520 aa).

Residues 9–202 form the Glutamine amidotransferase type-1 domain; sequence SVLIVDFGSQ…IHNIAGIKGD (194 aa). The active-site Nucleophile is cysteine 86. Active-site residues include histidine 176 and glutamate 178. One can recognise a GMPS ATP-PPase domain in the interval 203–395; sequence WSMSAYRQKA…LGLPDSFIGR (193 aa). ATP is bound at residue 230-236; the sequence is SGGVDSS.

Homodimer.

It catalyses the reaction XMP + L-glutamine + ATP + H2O = GMP + L-glutamate + AMP + diphosphate + 2 H(+). The protein operates within purine metabolism; GMP biosynthesis; GMP from XMP (L-Gln route): step 1/1. Catalyzes the synthesis of GMP from XMP. The polypeptide is GMP synthase [glutamine-hydrolyzing] (Rhizobium etli (strain CIAT 652)).